A 158-amino-acid polypeptide reads, in one-letter code: NAD(P)H-quinone oxidoreductase subunit J, chloroplastic (158 aa).

This sequence belongs to the complex I 30 kDa subunit family. In terms of assembly, NDH is composed of at least 16 different subunits, 5 of which are encoded in the nucleus.

Its subcellular location is the plastid. It is found in the chloroplast thylakoid membrane. It catalyses the reaction a plastoquinone + NADH + (n+1) H(+)(in) = a plastoquinol + NAD(+) + n H(+)(out). It carries out the reaction a plastoquinone + NADPH + (n+1) H(+)(in) = a plastoquinol + NADP(+) + n H(+)(out). Its function is as follows. NDH shuttles electrons from NAD(P)H:plastoquinone, via FMN and iron-sulfur (Fe-S) centers, to quinones in the photosynthetic chain and possibly in a chloroplast respiratory chain. The immediate electron acceptor for the enzyme in this species is believed to be plastoquinone. Couples the redox reaction to proton translocation, and thus conserves the redox energy in a proton gradient. The sequence is that of NAD(P)H-quinone oxidoreductase subunit J, chloroplastic from Lotus japonicus (Lotus corniculatus var. japonicus).